Consider the following 1180-residue polypeptide: Protocadherin-12 (1180 aa).

Residues 1–17 (MMLLLPFLLGLLGPGSY) form the signal peptide. Residues 18–716 (LFISGDCQEV…HEPGVLSTPA (699 aa)) are Extracellular-facing. 5 consecutive Cadherin domains span residues 28–135 (ATVM…QPQF), 136–244 (PKDE…SPVF), 245–352 (AESS…APSI), 355–460 (TWAS…APVF), and 461–565 (EKSR…APEV). 2 N-linked (GlcNAc...) asparagine glycosylation sites follow: asparagine 265 and asparagine 415. Residues asparagine 582, asparagine 659, and asparagine 662 are each glycosylated (N-linked (GlcNAc...) asparagine). The 112-residue stretch at 600 to 711 (PAGTGIPPKA…LRDSAHEPGV (112 aa)) folds into the Cadherin 6 domain. Residues 717 to 737 (LALICLAVLLAIFGLLLALFV) form a helical membrane-spanning segment. The Cytoplasmic portion of the chain corresponds to 738-1180 (SICRTERKDN…ESRLGCGRNL (443 aa)). Disordered stretches follow at residues 857–930 (NASR…GPHQ) and 973–1026 (QFQP…PEED). Residue serine 859 is modified to Phosphoserine. The segment covering 904–918 (PASSATLRRQRNFNG) has biased composition (polar residues). Positions 1014 to 1026 (PDLEEGPPSPEED) are enriched in acidic residues. Serine 1064 carries the phosphoserine modification. Residues 1076 to 1093 (SSPDATTSEEPRTFQTFG) are compositionally biased toward polar residues. Disordered stretches follow at residues 1076 to 1104 (SSPDATTSEEPRTFQTFGKTVGPGPELSP) and 1156 to 1180 (SGASASEAQGRKKAAESRLGCGRNL).

N-glycosylated. In terms of processing, cleaved by ADAM10 close to the transmembrane domain to release the Protocadherin-12, secreted form in the serum. Cleavage results in reduced cellular adhesion in a cell migration assay. In terms of tissue distribution, expressed in endothelial cells: localizes in vasculogenic rather than angiogenic endothelium. Strongly expressed in a subset of invasive cells of the placenta, named glycogen-rich trophoblasts cells (at protein level). glycogen-rich trophoblasts cells originate from the from the ectoplacental cone where they rapidly form tight islets (at protein level). In adult mice, present at high level in mesangial cells of kidney glomeruli, while expression was not detected in other types of perivascular cells.

The protein localises to the cell membrane. It is found in the cell junction. Its subcellular location is the secreted. In terms of biological role, cellular adhesion molecule that may play an important role in cell-cell interactions at interendothelial junctions. Acts as a regulator of cell migration, probably via increasing cell-cell adhesion. Promotes homotypic calcium-dependent aggregation and adhesion and clusters at intercellular junctions. Unable to bind to catenins, weakly associates with the cytoskeleton. In Mus musculus (Mouse), this protein is Protocadherin-12.